Here is a 33-residue protein sequence, read N- to C-terminus: Photosystem II reaction center protein Psb30 (33 aa).

A helical transmembrane segment spans residues 5 to 25; the sequence is VVAQLTVLALIVVSGPLVIGL.

The protein belongs to the Psb30/Ycf12 family. As to quaternary structure, PSII is composed of 1 copy each of membrane proteins PsbA, PsbB, PsbC, PsbD, PsbE, PsbF, PsbH, PsbI, PsbJ, PsbK, PsbL, PsbM, PsbT, PsbX, PsbY, PsbZ, Psb30/Ycf12, peripheral proteins of the oxygen-evolving complex and a large number of cofactors. It forms dimeric complexes.

The protein resides in the plastid. Its subcellular location is the chloroplast thylakoid membrane. Its function is as follows. A core subunit of photosystem II (PSII), probably helps stabilize the reaction center. In Zygnema circumcarinatum (Green alga), this protein is Photosystem II reaction center protein Psb30.